A 216-amino-acid chain; its full sequence is Ribosomal RNA small subunit methyltransferase G (216 aa).

Residues Gly73, Leu78, 124-125 (AE), and Arg139 each bind S-adenosyl-L-methionine.

It belongs to the methyltransferase superfamily. RNA methyltransferase RsmG family.

Its subcellular location is the cytoplasm. Specifically methylates the N7 position of guanine in position 518 of 16S rRNA. This Arthrobacter sp. (strain FB24) protein is Ribosomal RNA small subunit methyltransferase G.